We begin with the raw amino-acid sequence, 1204 residues long: MAMDQVNALCEQLVKAVTVMMDPNSTQRYRLEALKFCEEFKEKCPICVPCGLRLAEKTQVAIVRHFGLQILEHVVKFRWNGMSRLEKVYLKNSVMELIANGTLNILEEENHIKDALSRIVVEMIKREWPQHWPDMLIELDTLSKQGETQTELVMFILLRLAEDVVTFQTLPPQRRRDIQQTLTQNMERIFSFLLNTLQENVNKYQQVKTDTSQESKAQANCRVGVAALNTLAGYIDWVSMSHITAENCKLLEILCLLLNEQELQLGAAECLLIAVSRKGKLEDRKPLMVLFGDVAMHYILSAAQTADGGGLVEKHYVFLKRLCQVLCALGNQLCALLGADSDVETPSNFGKYLESFLAFTTHPSQFLRSSTQMTWGALFRHEILSRDPLLLAIIPKYLRASMTNLVKMGFPSKTDSPSCEYSRFDFDSDEDFNAFFNSSRAQQGEVMRLACRLDPKTSFQMAGEWLKYQLSTFLDAGSVNSCSAVGTGEGSLCSVFSPSFVQWEAMTLFLESVITQMFRTLNREEIPVNDGIELLQMVLNFDTKDPLILSCVLTNVSALFPFVTYRPEFLPQVFSKLFSSVTFETVEESKAPRTRAVRNVRRHACSSIIKMCRDYPQLVLPNFDMLYNHVKQLLSNELLLTQMEKCALMEALVLISNQFKNYERQKVFLEELMAPVASIWLSQDMHRVLSDVDAFIAYVGTDQKSCDPGLEDPCGLNRARMSFCVYSILGVVKRTCWPTDLEEAKAGGFVVGYTSSGNPIFRNPCTEQILKLLDNLLALIRTHNTLYAPEMLAKMAEPFTKALDMLDAEKSAILGLPQPLLELNDSPVFKTVLERMQRFFSTLYENCFHILGKAGPSMQQDFYTVEDLATQLLSSAFVNLNNIPDYRLRPMLRVFVKPLVLFCPPEHYEALVSPILGPLFTYLHMRLSQKWQVINQRSLLCGEDEAADENPESQEMLEEQLVRMLTREVMDLITVCCVSKKGADHSSAPPADGDDEEMMATEVTPSAMAELTDLGKCLMKHEDVCTALLITAFNSLAWKDTLSCQRTTSQLCWPLLKQVLSGTLLADAVTWLFTSVLKGLQMHGQHDGCMASLVHLAFQIYEALRPRYLEIRAVMEQIPEIQKDSLDQFDCKLLNPSLQKVADKRRKDQFKRLIAGCIGKPLGEQFRKEVHIKNLPSLFKKTKPMLETEVLDNDGGGLATIFEP.

Alanine 2 is modified (N-acetylalanine). A necessary for interaction with Ran region spans residues 2–108 (AMDQVNALCE…ANGTLNILEE (107 aa)). Residue lysine 396 is modified to N6-acetyllysine. The segment at 533–640 (ELLQMVLNFD…KQLLSNELLL (108 aa)) is necessary for interaction with ILF3. Residues 641–642 (TQ) are pre-miRNA binding. The residue at position 826 (serine 826) is a Phosphoserine.

Belongs to the exportin family. Component of a nuclear export receptor complex composed of XPO5, RAN, dsRNA-binding proteins and dsRNA. Found in a nuclear export complex with XPO5, RAN, EEF1A1, and aminoacylated tRNA. Found in a nuclear export complex with XPO5, RAN, ILF3 and dsRNA. Found in a nuclear export complex with XPO5, RAN and pre-miRNA. Found in a nuclear export complex with XPO5, RAN, ILF3 and minihelix VA1 dsRNA. Found in a nuclear export complex with XPO5, RAN, ILF3, ZNF346 and dsRNA. Interacts with EEF1A1, ILF3, NUP153, NUP214 and ZNF346. Interacts with RAN and cargo proteins in a GTP-dependent manner. Interacts with isoform 5 of ADAR/ADAR1 (via DRBM domains). Interacts with SMAD4; mediates nuclear export of SMAD4. Interacts with RAN (GTP-bound form). In terms of tissue distribution, expressed in heart, brain, placenta, lung, skeletal muscle, kidney and pancreas.

The protein resides in the nucleus. Its subcellular location is the cytoplasm. In terms of biological role, mediates the nuclear export of proteins bearing a double-stranded RNA binding domain (dsRBD) and double-stranded RNAs (cargos). XPO5 in the nucleus binds cooperatively to the RNA and to the GTPase Ran in its active GTP-bound form. Proteins containing dsRBDs can associate with this trimeric complex through the RNA. Docking of this complex to the nuclear pore complex (NPC) is mediated through binding to nucleoporins. Upon transit of a nuclear export complex into the cytoplasm, hydrolysis of Ran-GTP to Ran-GDP (induced by RANBP1 and RANGAP1, respectively) cause disassembly of the complex and release of the cargo from the export receptor. XPO5 then returns to the nuclear compartment by diffusion through the nuclear pore complex, to mediate another round of transport. The directionality of nuclear export is thought to be conferred by an asymmetric distribution of the GTP- and GDP-bound forms of Ran between the cytoplasm and nucleus. Overexpression may in some circumstances enhance RNA-mediated gene silencing (RNAi). Mediates nuclear export of isoform 5 of ADAR/ADAR1 in a RanGTP-dependent manner. Functionally, mediates the nuclear export of micro-RNA precursors, which form short hairpins. Also mediates the nuclear export of synthetic short hairpin RNAs used for RNA interference. In some circumstances can also mediate the nuclear export of deacylated and aminoacylated tRNAs. Specifically recognizes dsRNAs that lack a 5'-overhang in a sequence-independent manner, have only a short 3'-overhang, and that have a double-stranded length of at least 15 base-pairs. Binding is dependent on Ran-GTP. Its function is as follows. (Microbial infection) Mediates the nuclear export of adenovirus VA1 dsRNA. This chain is Exportin-5 (XPO5), found in Homo sapiens (Human).